A 418-amino-acid chain; its full sequence is Light-independent protochlorophyllide reductase subunit N (418 aa).

3 residues coordinate [4Fe-4S] cluster: Cys-17, Cys-42, and Cys-103.

This sequence belongs to the BchN/ChlN family. As to quaternary structure, protochlorophyllide reductase is composed of three subunits; ChlL, ChlN and ChlB. Forms a heterotetramer of two ChlB and two ChlN subunits. [4Fe-4S] cluster is required as a cofactor.

The enzyme catalyses chlorophyllide a + oxidized 2[4Fe-4S]-[ferredoxin] + 2 ADP + 2 phosphate = protochlorophyllide a + reduced 2[4Fe-4S]-[ferredoxin] + 2 ATP + 2 H2O. It participates in porphyrin-containing compound metabolism; chlorophyll biosynthesis (light-independent). In terms of biological role, component of the dark-operative protochlorophyllide reductase (DPOR) that uses Mg-ATP and reduced ferredoxin to reduce ring D of protochlorophyllide (Pchlide) to form chlorophyllide a (Chlide). This reaction is light-independent. The NB-protein (ChlN-ChlB) is the catalytic component of the complex. The chain is Light-independent protochlorophyllide reductase subunit N from Prochlorococcus marinus (strain MIT 9312).